The chain runs to 269 residues: 5'-nucleotidase SurE (269 aa).

The a divalent metal cation site is built by aspartate 11, aspartate 12, serine 43, and asparagine 101.

It belongs to the SurE nucleotidase family. A divalent metal cation is required as a cofactor.

It localises to the cytoplasm. The catalysed reaction is a ribonucleoside 5'-phosphate + H2O = a ribonucleoside + phosphate. Its function is as follows. Nucleotidase that shows phosphatase activity on nucleoside 5'-monophosphates. The protein is 5'-nucleotidase SurE of Prochlorococcus marinus (strain MIT 9515).